Reading from the N-terminus, the 92-residue chain is Small ribosomal subunit protein uS19 (92 aa).

It belongs to the universal ribosomal protein uS19 family.

In terms of biological role, protein S19 forms a complex with S13 that binds strongly to the 16S ribosomal RNA. This chain is Small ribosomal subunit protein uS19, found in Staphylococcus aureus (strain Mu3 / ATCC 700698).